We begin with the raw amino-acid sequence, 150 residues long: Endoribonuclease YbeY (150 aa).

Zn(2+) contacts are provided by H112, H116, and D122.

It belongs to the endoribonuclease YbeY family. Zn(2+) serves as cofactor.

It localises to the cytoplasm. Functionally, single strand-specific metallo-endoribonuclease involved in late-stage 70S ribosome quality control and in maturation of the 3' terminus of the 16S rRNA. This is Endoribonuclease YbeY from Protochlamydia amoebophila (strain UWE25).